We begin with the raw amino-acid sequence, 376 residues long: Probable deoxyhypusine synthase (376 aa).

Residues serine 105–serine 109, threonine 131–glycine 133, glutamate 137, and aspartate 238 each bind NAD(+). Glutamate 136–glutamate 137 is a spermidine binding site. Aspartate 243 serves as a coordination point for spermidine. Glycine 283 lines the NAD(+) pocket. Histidine 288 contacts spermidine. Threonine 308 to glycine 309 serves as a coordination point for NAD(+). Spermidine is bound by residues glycine 314 to aspartate 316 and glutamate 323 to lysine 329. The active-site Nucleophile is the lysine 329. Position 342-343 (glutamate 342–alanine 343) interacts with NAD(+).

Belongs to the deoxyhypusine synthase family. The cofactor is NAD(+).

The enzyme catalyses [eIF5A protein]-L-lysine + spermidine = [eIF5A protein]-deoxyhypusine + propane-1,3-diamine. Its pathway is protein modification; eIF5A hypusination. Functionally, catalyzes the NAD-dependent oxidative cleavage of spermidine and the subsequent transfer of the butylamine moiety of spermidine to the epsilon-amino group of a critical lysine residue of the eIF-5A precursor protein to form the intermediate deoxyhypusine residue. This is the first step of the post-translational modification of that lysine into an unusual amino acid residue named hypusine. Hypusination is unique to mature eIF-5A factor and is essential for its function. In Dictyostelium discoideum (Social amoeba), this protein is Probable deoxyhypusine synthase (dhps).